The primary structure comprises 525 residues: Bifunctional purine biosynthesis protein PurH (525 aa).

In terms of domain architecture, MGS-like spans 1-148; it reads MPSNNLIKNA…KNYKNVIVIV (148 aa).

Belongs to the PurH family.

The enzyme catalyses (6R)-10-formyltetrahydrofolate + 5-amino-1-(5-phospho-beta-D-ribosyl)imidazole-4-carboxamide = 5-formamido-1-(5-phospho-D-ribosyl)imidazole-4-carboxamide + (6S)-5,6,7,8-tetrahydrofolate. It carries out the reaction IMP + H2O = 5-formamido-1-(5-phospho-D-ribosyl)imidazole-4-carboxamide. It participates in purine metabolism; IMP biosynthesis via de novo pathway; 5-formamido-1-(5-phospho-D-ribosyl)imidazole-4-carboxamide from 5-amino-1-(5-phospho-D-ribosyl)imidazole-4-carboxamide (10-formyl THF route): step 1/1. Its pathway is purine metabolism; IMP biosynthesis via de novo pathway; IMP from 5-formamido-1-(5-phospho-D-ribosyl)imidazole-4-carboxamide: step 1/1. The protein is Bifunctional purine biosynthesis protein PurH of Buchnera aphidicola subsp. Acyrthosiphon pisum (strain 5A).